The sequence spans 152 residues: Ribosome maturation factor RimP (152 aa).

The protein belongs to the RimP family.

It localises to the cytoplasm. Required for maturation of 30S ribosomal subunits. The sequence is that of Ribosome maturation factor RimP from Burkholderia ambifaria (strain MC40-6).